The primary structure comprises 183 residues: TATA-box-binding protein (183 aa).

2 repeat units span residues 8–84 (VENI…VDKI) and 99–175 (IQNI…KERL).

Belongs to the TBP family.

Its function is as follows. General factor that plays a role in the activation of archaeal genes transcribed by RNA polymerase. Binds specifically to the TATA box promoter element which lies close to the position of transcription initiation. In Methanosphaera stadtmanae (strain ATCC 43021 / DSM 3091 / JCM 11832 / MCB-3), this protein is TATA-box-binding protein.